Consider the following 371-residue polypeptide: uncharacterized protein (371 aa).

The protein to E.coli YcjY.

This is an uncharacterized protein from Pseudomonas aeruginosa (strain ATCC 15692 / DSM 22644 / CIP 104116 / JCM 14847 / LMG 12228 / 1C / PRS 101 / PAO1).